Consider the following 250-residue polypeptide: Exotoxin type A (250 aa).

The signal sequence occupies residues 1–30 (MENNKEVLKKMVFFVLMKFLGLTILPKGIC). Cys-117 and Cys-128 are disulfide-bonded.

Belongs to the staphylococcal/streptococcal toxin family.

Functionally, causative agent of the symptoms associated with scarlet fever, have been associated with streptococcal toxic shock-like disease and may play a role in the early events of rheumatic fever. The chain is Exotoxin type A (speA) from Streptococcus pyogenes.